Here is a 268-residue protein sequence, read N- to C-terminus: Nuclear protein UL4 homolog (268 aa).

This sequence belongs to the alphaherpesvirinae HHV-1 UL4 family.

It is found in the host nucleus. The chain is Nuclear protein UL4 homolog (MDV016) from Gallid herpesvirus 2 (strain Chicken/Md5/ATCC VR-987) (GaHV-2).